Here is a 270-residue protein sequence, read N- to C-terminus: Cytochrome c oxidase subunit 3 (270 aa).

A run of 7 helical transmembrane segments spans residues 22-42 (PWPIVVSFSLLSLALSLGLTM), 46-66 (IGEMYLVNLALLVVLGSGVLW), 88-108 (INIGFLLFVLSEVLIFSALFW), 128-148 (VGITAVQPTELPLLNTIILLA), 168-188 (SLSGLLITTWLIIIFVICQYI), 205-225 (VFFAGTGLHFLHMVMLAIMLA), and 248-268 (IIYLHVLDVIWLFLYIVFYWW).

Belongs to the cytochrome c oxidase subunit 3 family. Component of the cytochrome c oxidase (complex IV, CIV), a multisubunit enzyme composed of a catalytic core of 3 subunits and several supernumerary subunits. The complex exists as a monomer or a dimer and forms supercomplexes (SCs) in the inner mitochondrial membrane with ubiquinol-cytochrome c oxidoreductase (cytochrome b-c1 complex, complex III, CIII).

Its subcellular location is the mitochondrion inner membrane. It catalyses the reaction 4 Fe(II)-[cytochrome c] + O2 + 8 H(+)(in) = 4 Fe(III)-[cytochrome c] + 2 H2O + 4 H(+)(out). Functionally, component of the cytochrome c oxidase, the last enzyme in the mitochondrial electron transport chain which drives oxidative phosphorylation. The respiratory chain contains 3 multisubunit complexes succinate dehydrogenase (complex II, CII), ubiquinol-cytochrome c oxidoreductase (cytochrome b-c1 complex, complex III, CIII) and cytochrome c oxidase (complex IV, CIV), that cooperate to transfer electrons derived from NADH and succinate to molecular oxygen, creating an electrochemical gradient over the inner membrane that drives transmembrane transport and the ATP synthase. Cytochrome c oxidase is the component of the respiratory chain that catalyzes the reduction of oxygen to water. Electrons originating from reduced cytochrome c in the intermembrane space (IMS) are transferred via the dinuclear copper A center (CU(A)) of subunit 2 and heme A of subunit 1 to the active site in subunit 1, a binuclear center (BNC) formed by heme A3 and copper B (CU(B)). The BNC reduces molecular oxygen to 2 water molecules using 4 electrons from cytochrome c in the IMS and 4 protons from the mitochondrial matrix. This is Cytochrome c oxidase subunit 3 (COX3) from Vanderwaltozyma polyspora (strain ATCC 22028 / DSM 70294 / BCRC 21397 / CBS 2163 / NBRC 10782 / NRRL Y-8283 / UCD 57-17) (Kluyveromyces polysporus).